The following is a 124-amino-acid chain: Small ribosomal subunit protein uS12 (124 aa).

A 3-methylthioaspartic acid modification is found at aspartate 89.

This sequence belongs to the universal ribosomal protein uS12 family. Part of the 30S ribosomal subunit. Contacts proteins S8 and S17. May interact with IF1 in the 30S initiation complex.

In terms of biological role, with S4 and S5 plays an important role in translational accuracy. Interacts with and stabilizes bases of the 16S rRNA that are involved in tRNA selection in the A site and with the mRNA backbone. Located at the interface of the 30S and 50S subunits, it traverses the body of the 30S subunit contacting proteins on the other side and probably holding the rRNA structure together. The combined cluster of proteins S8, S12 and S17 appears to hold together the shoulder and platform of the 30S subunit. In Psychrobacter arcticus (strain DSM 17307 / VKM B-2377 / 273-4), this protein is Small ribosomal subunit protein uS12.